The sequence spans 342 residues: N-acetyl-gamma-glutamyl-phosphate reductase (342 aa).

C147 is an active-site residue.

This sequence belongs to the NAGSA dehydrogenase family. Type 1 subfamily.

The protein localises to the cytoplasm. It catalyses the reaction N-acetyl-L-glutamate 5-semialdehyde + phosphate + NADP(+) = N-acetyl-L-glutamyl 5-phosphate + NADPH + H(+). It participates in amino-acid biosynthesis; L-arginine biosynthesis; N(2)-acetyl-L-ornithine from L-glutamate: step 3/4. Functionally, catalyzes the NADPH-dependent reduction of N-acetyl-5-glutamyl phosphate to yield N-acetyl-L-glutamate 5-semialdehyde. This is N-acetyl-gamma-glutamyl-phosphate reductase from Campylobacter jejuni subsp. jejuni serotype O:2 (strain ATCC 700819 / NCTC 11168).